The chain runs to 287 residues: Isopentenyl-diphosphate Delta-isomerase 1, chloroplastic (287 aa).

A chloroplast-targeting transit peptide spans 1–51; that stretch reads MTLLLNTTAKLYIAPRTLPFTSSSTFARSPFLRIPSLLKPLSPLTARVSLS. Lysine 90 is a binding site for substrate. 2 residues coordinate Mg(2+): histidine 94 and histidine 106. Positions 104–256 constitute a Nudix hydrolase domain; that stretch reads LLHRAFSVFL…GLKLSPWFRL (153 aa). Substrate is bound by residues arginine 125 and lysine 129. Cysteine 141 is an active-site residue. Serine 142 contributes to the substrate binding site. The Nudix box motif lies at 142–172; it reads SHPLYRESELIDEESLGARNAAQRKLLDELG. Mg(2+) is bound by residues glutamate 201 and glutamate 203. Glutamate 203 is a catalytic residue.

This sequence belongs to the IPP isomerase type 1 family. Monomer. Mg(2+) is required as a cofactor. As to expression, mainly expressed in roots and trichomes and, to a lower extent, in leaves, flowers and stems.

It localises to the plastid. The protein localises to the chloroplast. It catalyses the reaction isopentenyl diphosphate = dimethylallyl diphosphate. Its pathway is isoprenoid biosynthesis; dimethylallyl diphosphate biosynthesis; dimethylallyl diphosphate from isopentenyl diphosphate: step 1/1. The protein operates within porphyrin-containing compound metabolism; chlorophyll biosynthesis. Its function is as follows. Catalyzes the 1,3-allylic rearrangement of the homoallylic substrate isopentenyl (IPP) to its highly electrophilic allylic isomer, dimethylallyl diphosphate (DMAPP). This Cannabis sativa (Hemp) protein is Isopentenyl-diphosphate Delta-isomerase 1, chloroplastic.